A 449-amino-acid chain; its full sequence is MAKAAIIGLGRSGIAAARCLKRDGWQVTLSDRSDSPSLQATKTNLEREGIIVNLGQNLSLEASDLPNLIVVSPGVPWDAPILITAREKGIDTIGELELAWRYLQSSPWLGITGTNGKTTTTALCAAIFQKAGLNAPSCGNIGYAACELALKADKYDWIIAEISSYQIESSRDLSPKIGIWTTFTPDHLSRHQTLENYYQIKASLLQRSDRQILNGDDPYLRQIGVSQWQQAYWTSVQGKAALLGDPSRGVYLQDNWIVAFGELIAPVNLLKMVGSHNQQNLLMAVAAARLAGIEKKAITEAIATFPGVAHRLEYVCTYKGLDFINDSKATNYDAAAVGLQSVPSPAILIAGGEAKAGDDRAWIAEIKAKVATVLLIGDAAADFARRLQSAGYQDYECVETMDRAVQRAAELGPAKEAKVVLLSPACASFDQYPSFEHRGTHFRQLSLQL.

113 to 119 (GTNGKTT) serves as a coordination point for ATP.

Belongs to the MurCDEF family.

The protein localises to the cytoplasm. The catalysed reaction is UDP-N-acetyl-alpha-D-muramoyl-L-alanine + D-glutamate + ATP = UDP-N-acetyl-alpha-D-muramoyl-L-alanyl-D-glutamate + ADP + phosphate + H(+). It participates in cell wall biogenesis; peptidoglycan biosynthesis. Functionally, cell wall formation. Catalyzes the addition of glutamate to the nucleotide precursor UDP-N-acetylmuramoyl-L-alanine (UMA). In Microcystis aeruginosa (strain NIES-843 / IAM M-2473), this protein is UDP-N-acetylmuramoylalanine--D-glutamate ligase.